A 237-amino-acid polypeptide reads, in one-letter code: Ribose-5-phosphate isomerase A (237 aa).

Residues 30-33, 87-90, and 100-103 each bind substrate; these read SGST, DGAD, and KGGG. The Proton acceptor role is filled by E109. A substrate-binding site is contributed by K127.

It belongs to the ribose 5-phosphate isomerase family. As to quaternary structure, homodimer.

The catalysed reaction is aldehydo-D-ribose 5-phosphate = D-ribulose 5-phosphate. The protein operates within carbohydrate degradation; pentose phosphate pathway; D-ribose 5-phosphate from D-ribulose 5-phosphate (non-oxidative stage): step 1/1. Functionally, catalyzes the reversible conversion of ribose-5-phosphate to ribulose 5-phosphate. The sequence is that of Ribose-5-phosphate isomerase A from Synechococcus sp. (strain RCC307).